The chain runs to 93 residues: uncharacterized protein (93 aa).

This is an uncharacterized protein from Rickettsia conorii (strain ATCC VR-613 / Malish 7).